The sequence spans 689 residues: MKFENLLIEIGTEELPPKALRTLAESFQANFSEELTKAELPFESIEWYAAPRRLALYVKGLATAQEDKVVEKRGPAVQSAFDADGNPTKAAEGWARGNGITVAEAERLATDKGEWLVYRANVAGEPTSVLVPAMTQRALDKLPIPKPMRWGSNSTQFIRPVHTVTLLLGSELIAGEVLGIQSDRTIRGHRFMGESSFSLDHADNYLAALKERGKVIADYQARKALIKADAEKAAAVIGGNADIEESLLEEVASLVEWPVVLTAHFEEKFLAVPAEALVYTMKGDQKYFPVFSNDGKLLPNFIFVANIESKDPAQIIAGNEKVVRPRLADAEFFFNTDKKHTLASRLASLETVVFQKQLGTLKDRAERISALAGFIAGQIGASSEDAARAGLLSKCDLMTNMVMEFTDTQGTMGMHYARLDGEAEAVAVALEEQYKPKFSGDSVPSAGVSCAVALAEKLDTLSGIFGIGQAPKGAADPFALRRAAIGVLRIIVENKLPLDLVDLIAKAVELHGSNLSNALAADEVLEFLMGRFRAWYQDKGISTDVILAVLARRPTRPADFDDRILAVSHFRTLEQAAALAAANKRVSNILAKVEGELPSSINDALLSEAAEKALAAKLAEVTPVIAPLFAAGNYQQALTELAALRESVDQFFEDVMVMADDQALRNNRLALLGNLRDQFLHVADISLLQ.

Belongs to the class-II aminoacyl-tRNA synthetase family. As to quaternary structure, tetramer of two alpha and two beta subunits.

The protein localises to the cytoplasm. It catalyses the reaction tRNA(Gly) + glycine + ATP = glycyl-tRNA(Gly) + AMP + diphosphate. This is Glycine--tRNA ligase beta subunit from Shewanella amazonensis (strain ATCC BAA-1098 / SB2B).